We begin with the raw amino-acid sequence, 159 residues long: 2-C-methyl-D-erythritol 2,4-cyclodiphosphate synthase (159 aa).

Residues D11 and H13 each coordinate a divalent metal cation. 4-CDP-2-C-methyl-D-erythritol 2-phosphate is bound by residues 11 to 13 and 37 to 38; these read DVH and HS. An a divalent metal cation-binding site is contributed by H45. 4-CDP-2-C-methyl-D-erythritol 2-phosphate is bound by residues 59–61 and 64–68; these read DIG and FPDSD.

The protein belongs to the IspF family. Homotrimer. Requires a divalent metal cation as cofactor.

It carries out the reaction 4-CDP-2-C-methyl-D-erythritol 2-phosphate = 2-C-methyl-D-erythritol 2,4-cyclic diphosphate + CMP. It functions in the pathway isoprenoid biosynthesis; isopentenyl diphosphate biosynthesis via DXP pathway; isopentenyl diphosphate from 1-deoxy-D-xylulose 5-phosphate: step 4/6. Its function is as follows. Involved in the biosynthesis of isopentenyl diphosphate (IPP) and dimethylallyl diphosphate (DMAPP), two major building blocks of isoprenoid compounds. Catalyzes the conversion of 4-diphosphocytidyl-2-C-methyl-D-erythritol 2-phosphate (CDP-ME2P) to 2-C-methyl-D-erythritol 2,4-cyclodiphosphate (ME-CPP) with a corresponding release of cytidine 5-monophosphate (CMP). This is 2-C-methyl-D-erythritol 2,4-cyclodiphosphate synthase from Solibacter usitatus (strain Ellin6076).